The chain runs to 250 residues: Transcriptional activator protein EchR (250 aa).

Residues 173 to 238 (KSQEPNIFSQ…HAIRLGVEMN (66 aa)) form the HTH luxR-type domain. A DNA-binding region (H-T-H motif) is located at residues 197–216 (YQEIALILGITTSTVKFHIG).

This sequence belongs to the autoinducer-regulated transcriptional regulatory protein family.

Its function is as follows. Functions as a potential ohlL-responsive transcriptional regulator. The chain is Transcriptional activator protein EchR (echR) from Dickeya chrysanthemi (Pectobacterium chrysanthemi).